Consider the following 440-residue polypeptide: C4-dicarboxylate TRAP transporter large permease protein DctM (440 aa).

The next 13 membrane-spanning stretches (helical) occupy residues 4–24 (LIIF…SISL), 54–74 (FEIM…HGGV), 89–109 (WHGG…AVSG), 112–132 (PATV…QGFP), 148–168 (ILIP…GMVV), 181–201 (VGEL…FLAF), 230–250 (AAWG…GIFT), 255–275 (AAMS…DLTL), 291–311 (MLLY…HEGI), 318–338 (WMVN…ILLL), 349–369 (IVLI…IDPV), 370–390 (HFGI…PVGL), and 410–430 (VWPW…VPAI).

This sequence belongs to the TRAP transporter large permease family. In terms of assembly, the complex comprises the extracytoplasmic solute receptor protein DctP, and the two transmembrane proteins DctQ and DctM.

It is found in the cell inner membrane. Its function is as follows. Part of the tripartite ATP-independent periplasmic (TRAP) transport system DctPQM involved in C4-dicarboxylates uptake. The polypeptide is C4-dicarboxylate TRAP transporter large permease protein DctM (Rhodobacter capsulatus (Rhodopseudomonas capsulata)).